We begin with the raw amino-acid sequence, 309 residues long: Probable sugar phosphate/phosphate translocator At5g05820 (309 aa).

10 helical membrane passes run 9 to 29, 42 to 62, 77 to 97, 100 to 120, 130 to 150, 154 to 174, 192 to 212, 229 to 249, 256 to 278, and 282 to 301; these read FFTI…LLLN, IFLT…AIAW, FFKI…GNIS, FLPV…TAVF, AWLT…ASGG, FHLF…LKSV, LLLY…LIME, IVWY…TNFL, ALTL…ILIF, and VSVT…ILYS. An EamA domain is found at 30 to 147; the sequence is KYLLSNYGFK…VPVVTGVVIA (118 aa).

Belongs to the TPT transporter family. TPT (TC 2.A.7.9) subfamily.

Its subcellular location is the membrane. This Arabidopsis thaliana (Mouse-ear cress) protein is Probable sugar phosphate/phosphate translocator At5g05820.